A 450-amino-acid chain; its full sequence is Salicylate synthase (450 aa).

The active-site Proton donor is the E252. Position 270–271 (270–271) interacts with substrate; the sequence is GT. Mg(2+) is bound at residue E297. Substrate is bound by residues Y385, R405, and 419 to 421; that span reads GAG. Residues E431 and E434 each coordinate Mg(2+). Position 438 (K438) interacts with substrate.

The protein belongs to the anthranilate synthase component I family. Salicylate synthase subfamily. As to quaternary structure, monomer. The cofactor is Mg(2+).

It catalyses the reaction chorismate = isochorismate. The enzyme catalyses isochorismate = salicylate + pyruvate. It carries out the reaction chorismate = prephenate. Its pathway is siderophore biosynthesis; mycobactin biosynthesis. In terms of biological role, involved in the incorporation of salicylate into the virulence-conferring salicylate-based siderophore mycobactin. Catalyzes the initial conversion of chorismate to yield the intermediate isochorismate (isochorismate synthase activity), and the subsequent elimination of the enolpyruvyl side chain in a lyase reaction to give salicylate (isochorismate pyruvate-lyase activity). In the absence of magnesium, MbtI displays a chorismate mutase activity and converts chorismate to prephenate. This chain is Salicylate synthase (mbtI), found in Mycobacterium bovis (strain ATCC BAA-935 / AF2122/97).